Reading from the N-terminus, the 298-residue chain is Probable tRNA(His) guanylyltransferase (298 aa).

3 residues coordinate Mg(2+): Asp-58, Gly-59, and Asp-105. Residues 58-63 and 104-105 each bind GTP; these read DGRNFH and SD.

Belongs to the tRNA(His) guanylyltransferase family. In terms of assembly, homotetramer. Interacts with MFN1 and MFN2; functions as a guanyl-nucleotide exchange factor/GEF for MFN2 and also probably MFN1. Mg(2+) is required as a cofactor.

It localises to the cytoplasm. Its subcellular location is the mitochondrion. It carries out the reaction a 5'-end ribonucleotide-tRNA(His) + GTP + ATP + H2O = a 5'-end phospho-guanosine-ribonucleotide-tRNA(His) + AMP + 2 diphosphate + H(+). Adds a GMP to the 5'-end of tRNA(His) after transcription and RNase P cleavage. This step is essential for proper recognition of the tRNA and for the fidelity of protein synthesis. Also functions as a guanyl-nucleotide exchange factor/GEF for the MFN1 and MFN2 mitofusins thereby regulating mitochondrial fusion. By regulating both mitochondrial dynamics and bioenergetic function, it contributes to cell survival following oxidative stress. This is Probable tRNA(His) guanylyltransferase (THG1L) from Bos taurus (Bovine).